Consider the following 58-residue polypeptide: Keratin-associated protein 21-3 (58 aa).

In terms of assembly, interacts with hair keratins.

In the hair cortex, hair keratin intermediate filaments are embedded in an interfilamentous matrix, consisting of hair keratin-associated proteins (KRTAP), which are essential for the formation of a rigid and resistant hair shaft through their extensive disulfide bond cross-linking with abundant cysteine residues of hair keratins. The matrix proteins include the high-sulfur and high-glycine-tyrosine keratins. The chain is Keratin-associated protein 21-3 (KRTAP21-3) from Homo sapiens (Human).